A 650-amino-acid polypeptide reads, in one-letter code: DNA gyrase subunit B (650 aa).

Residues 429–543 (NELFIVEGDS…AGYVYIAQPP (115 aa)) enclose the Toprim domain. Residues Glu-435, Asp-508, and Asp-510 each coordinate Mg(2+).

It belongs to the type II topoisomerase GyrB family. In terms of assembly, heterotetramer, composed of two GyrA and two GyrB chains. In the heterotetramer, GyrA contains the active site tyrosine that forms a transient covalent intermediate with DNA, while GyrB binds cofactors and catalyzes ATP hydrolysis. Mg(2+) is required as a cofactor. Requires Mn(2+) as cofactor. It depends on Ca(2+) as a cofactor.

The protein resides in the cytoplasm. It carries out the reaction ATP-dependent breakage, passage and rejoining of double-stranded DNA.. Functionally, a type II topoisomerase that negatively supercoils closed circular double-stranded (ds) DNA in an ATP-dependent manner to modulate DNA topology and maintain chromosomes in an underwound state. Negative supercoiling favors strand separation, and DNA replication, transcription, recombination and repair, all of which involve strand separation. Also able to catalyze the interconversion of other topological isomers of dsDNA rings, including catenanes and knotted rings. Type II topoisomerases break and join 2 DNA strands simultaneously in an ATP-dependent manner. The protein is DNA gyrase subunit B of Streptococcus pyogenes serotype M18 (strain MGAS8232).